An 87-amino-acid chain; its full sequence is Small ribosomal subunit protein bS20 (87 aa).

Residues 1 to 22 (MAHHKSALKRIKQNKRKQFRNK) are disordered.

The protein belongs to the bacterial ribosomal protein bS20 family.

Its function is as follows. Binds directly to 16S ribosomal RNA. This chain is Small ribosomal subunit protein bS20, found in Geobacter metallireducens (strain ATCC 53774 / DSM 7210 / GS-15).